Reading from the N-terminus, the 105-residue chain is Hydrogen cyanide synthase subunit HcnA (105 aa).

The 2Fe-2S ferredoxin-type domain occupies alanine 16 to arginine 97. Cysteine 60, cysteine 65, cysteine 68, and cysteine 81 together coordinate [2Fe-2S] cluster.

As to quaternary structure, heterotrimer of HcnA, HcnB and HcnC.

It localises to the cell membrane. The catalysed reaction is glycine + 2 A = hydrogen cyanide + 2 AH2 + CO2. Its function is as follows. A three-component membrane-bound flavoenzyme that catalyzes the formation of hydrogen cyanide, a secondary metabolite, by transfer of electrons to a cyanide-resistant branch of the aerobic respiratory chain. Contributes to suppression of black root rot of tobacco. This Pseudomonas protegens (strain DSM 19095 / LMG 27888 / CFBP 6595 / CHA0) protein is Hydrogen cyanide synthase subunit HcnA.